The chain runs to 201 residues: Testis-expressed protein 38 (201 aa).

The helical transmembrane segment at 3 to 23 threads the bilayer; sequence ISLCIGFLGLCSVLIGSCILF.

Its subcellular location is the membrane. This chain is Testis-expressed protein 38 (Tex38), found in Mus musculus (Mouse).